A 488-amino-acid chain; its full sequence is Diacylglycerol kinase 3 (488 aa).

Residues 1-24 (MDSPVSKTDASKEKFVASRPSTAD) are disordered. Residues 87-245 (APHAPMVVFI…SWKILVSMPS (159 aa)) form the DAGKc domain.

The protein belongs to the eukaryotic diacylglycerol kinase family. Monomer.

It carries out the reaction a 1,2-diacyl-sn-glycerol + ATP = a 1,2-diacyl-sn-glycero-3-phosphate + ADP + H(+). Phosphorylates the second messenger diacylglycerol (DAG) to generate phosphatidic acid (PA), another important signaling molecule. PA is required for plant development and responses to abiotic stress and pathogen attack. May be involved in the accumulation of PA during cold stress. This chain is Diacylglycerol kinase 3 (DGK3), found in Arabidopsis thaliana (Mouse-ear cress).